Here is a 441-residue protein sequence, read N- to C-terminus: Probable indole-3-acetic acid-amido synthetase GH3.9 (441 aa).

The protein belongs to the IAA-amido conjugating enzyme family. Expressed in etiolated seedlings and roots.

Functionally, may catalyze the synthesis of indole-3-acetic acid (IAA)-amino acid conjugates, providing a mechanism for the plant to cope with the presence of excess auxin. The polypeptide is Probable indole-3-acetic acid-amido synthetase GH3.9 (GH3.9) (Oryza sativa subsp. japonica (Rice)).